A 643-amino-acid polypeptide reads, in one-letter code: Phosphatidylinositol-3,5-bisphosphate 3-phosphatase MTMR2 (643 aa).

Composition is skewed to polar residues over residues 1–12 (MEKSSSCESLGS) and 23–40 (DSLSSASTSHSENSVHTK). The interval 1-56 (MEKSSSCESLGSQPAAARPPSVDSLSSASTSHSENSVHTKSASVVSSDSISTSADN) is disordered. 2 positions are modified to phosphoserine: serine 6 and serine 9. Over residues 41–55 (SASVVSSDSISTSAD) the composition is skewed to low complexity. Position 58 is a phosphoserine (serine 58). In terms of domain architecture, GRAM spans 68–139 (NKLAEMEEPP…GVINRVEKIG (72 aa)). A Myotubularin phosphatase domain is found at 205 to 580 (GWKLYDPLLE…RHLELWVGYY (376 aa)). 3 residues coordinate a 1,2-diacyl-sn-glycero-3-phospho-(1D-myo-inositol-3,5-bisphosphate): asparagine 330, asparagine 355, and isoleucine 356. Positions 330, 355, and 356 each coordinate a 1,2-diacyl-sn-glycero-3-phospho-(1D-myo-inositol-3-phosphate). Cysteine 417 functions as the Phosphocysteine intermediate in the catalytic mechanism. A 1,2-diacyl-sn-glycero-3-phospho-(1D-myo-inositol-3,5-bisphosphate) is bound by residues serine 418, aspartate 419, glycine 420, tryptophan 421, aspartate 422, arginine 423, arginine 459, and arginine 463. A 1,2-diacyl-sn-glycero-3-phospho-(1D-myo-inositol-3-phosphate) contacts are provided by serine 418, aspartate 419, glycine 420, tryptophan 421, aspartate 422, and arginine 423. Arginine 463 provides a ligand contact to a 1,2-diacyl-sn-glycero-3-phospho-(1D-myo-inositol-3-phosphate). Positions 593-627 (IHNRYKELLAKRAELQKKVEELQREISNRSTSSSE) form a coiled coil. Positions 615 to 643 (QREISNRSTSSSERASSPAQCVTPVQTVV) are disordered. A compositionally biased stretch (low complexity) spans 620 to 631 (NRSTSSSERASS). A compositionally biased stretch (polar residues) spans 632-643 (PAQCVTPVQTVV).

Belongs to the protein-tyrosine phosphatase family. Non-receptor class myotubularin subfamily. As to quaternary structure, homodimer (via coiled-coil domain). Heterotetramer consisting of one MTMR2 dimer and one SBF2/MTMR13 dimer; specifically in peripheral nerves stabilizes SBF2/MTMR13 at the membranes and increases MTMR2 catalytic activity towards phosphatidylinositol 3,5-bisphosphate and to a lesser extent towards phosphatidylinositol 3-phosphate. Heterodimer with SBF1/MTMR5; acts as an adapter for the phosphatase MTMR2 to regulate MTMR2 catalytic activity and subcellular location. Heterodimer with MTMR12. Phosphorylation at Ser-58 decreases MTMR2 localization to endocytic vesicular structures.

Its subcellular location is the cytoplasm. It localises to the early endosome membrane. The protein localises to the perinuclear region. The protein resides in the cell projection. It is found in the axon. Its subcellular location is the endosome membrane. It catalyses the reaction a 1,2-diacyl-sn-glycero-3-phospho-(1D-myo-inositol-3,5-bisphosphate) + H2O = a 1,2-diacyl-sn-glycero-3-phospho-(1D-myo-inositol-5-phosphate) + phosphate. The catalysed reaction is a 1,2-diacyl-sn-glycero-3-phospho-(1D-myo-inositol-3-phosphate) + H2O = a 1,2-diacyl-sn-glycero-3-phospho-(1D-myo-inositol) + phosphate. The enzyme catalyses 1,2-dioctanoyl-sn-glycero-3-phospho-(1-D-myo-inositol-3-phosphate) + H2O = 1,2-dioctanoyl-sn-glycero-3-phospho-(1D-myo-inositol) + phosphate. It carries out the reaction 1,2-dioctanoyl-sn-glycero-3-phospho-(1D-myo-inositol-3,5-bisphosphate) + H2O = 1,2-dioctanoyl-sn-glycero-3-phospho-(1D-myo-inositol-5-phosphate) + phosphate. Functionally, lipid phosphatase that specifically dephosphorylates the D-3 position of phosphatidylinositol 3-phosphate and phosphatidylinositol 3,5-bisphosphate, generating phosphatidylinositol and phosphatidylinositol 5-phosphate. Regulates the level of these phosphoinositides critical for various biological processes including autophagy initiation and autophagosome maturation. The polypeptide is Phosphatidylinositol-3,5-bisphosphate 3-phosphatase MTMR2 (Homo sapiens (Human)).